The primary structure comprises 102 residues: Noncompact myelin-associated protein (102 aa).

Residues 1–30 (MTTATPLGDTTFFSLNMTTRGEDFLYKSSG) lie on the Extracellular side of the membrane. Residues 31 to 51 (AIVAAVVVVVIIIFTVVLILL) form a helical membrane-spanning segment. The Cytoplasmic segment spans residues 52–102 (KMYNRKMRTRRELEPKGPKPTAPSAVGPNSNGSQHPATVTFSPVDVQVETR). The interval 60–102 (TRRELEPKGPKPTAPSAVGPNSNGSQHPATVTFSPVDVQVETR) is disordered. Over residues 78–92 (GPNSNGSQHPATVTF) the composition is skewed to polar residues.

Glycosylated.

It localises to the cell membrane. Functionally, plays a role in myelin formation. This chain is Noncompact myelin-associated protein (NCMAP), found in Homo sapiens (Human).